Consider the following 223-residue polypeptide: Sigma non-opioid intracellular receptor 1 (223 aa).

At 1 to 9 (MCWAVGRRW) the chain is on the lumenal side. The interval 2 to 8 (CWAVGRR) is targeting to endoplasmic reticulum-associated lipid droplets. The chain crosses the membrane as a helical span at residues 10–30 (AWAALLLAVAAVLAQVVWLWL). The Cytoplasmic segment spans residues 31–223 (GTQSFVFQHE…LTTYLFGQDA (193 aa)). The segment at 99–106 (SLSEYVLL) is important for ligand-binding. The C-terminal hydrophobic region stretch occupies residues 177 to 223 (VIPSTLGFALADTVFSTQDFLTLFYTLRAYARGLRLELTTYLFGQDA).

This sequence belongs to the ERG2 family. In terms of assembly, homotrimer. Forms a ternary complex with ANK2 and ITPR3. The complex is disrupted by agonists. Interacts with KCNA4. Interacts with KCNA2; cocaine consumption leads to increased interaction. Interacts with RNF112 in an oxidative stress-regulated manner.

It localises to the nucleus inner membrane. Its subcellular location is the nucleus outer membrane. It is found in the nucleus envelope. The protein resides in the cytoplasmic vesicle. The protein localises to the endoplasmic reticulum membrane. It localises to the membrane. Its subcellular location is the lipid droplet. It is found in the cell junction. The protein resides in the cell membrane. The protein localises to the cell projection. It localises to the growth cone. Its subcellular location is the postsynaptic density membrane. Functionally, functions in lipid transport from the endoplasmic reticulum and is involved in a wide array of cellular functions probably through regulation of the biogenesis of lipid microdomains at the plasma membrane. Involved in the regulation of different receptors it plays a role in BDNF signaling and EGF signaling. Also regulates ion channels like the potassium channel and could modulate neurotransmitter release. Plays a role in calcium signaling through modulation together with ANK2 of the ITP3R-dependent calcium efflux at the endoplasmic reticulum. Plays a role in several other cell functions including proliferation, survival and death. Originally identified for its ability to bind various psychoactive drugs it is involved in learning processes, memory and mood alteration. Necessary for proper mitochondrial axonal transport in motor neurons, in particular the retrograde movement of mitochondria. Plays a role in protecting cells against oxidative stress-induced cell death via its interaction with RNF112. The polypeptide is Sigma non-opioid intracellular receptor 1 (SIGMAR1) (Bos taurus (Bovine)).